The primary structure comprises 303 residues: D-alanine--D-alanine ligase B (303 aa).

In terms of domain architecture, ATP-grasp spans 103–298; sequence KLLWKGAGLP…YEDLCLKVLD (196 aa). 129–184 contacts ATP; the sequence is ERQLGLPIFVKPSTEGSSIGVTKVKQPGELRAAFEEARKYDKVVIAEQFIGGGEYT. Residues aspartate 252, glutamate 265, and asparagine 267 each coordinate Mg(2+).

Belongs to the D-alanine--D-alanine ligase family. It depends on Mg(2+) as a cofactor. Mn(2+) is required as a cofactor.

It localises to the cytoplasm. It carries out the reaction 2 D-alanine + ATP = D-alanyl-D-alanine + ADP + phosphate + H(+). It participates in cell wall biogenesis; peptidoglycan biosynthesis. Cell wall formation. In Chromobacterium violaceum (strain ATCC 12472 / DSM 30191 / JCM 1249 / CCUG 213 / NBRC 12614 / NCIMB 9131 / NCTC 9757 / MK), this protein is D-alanine--D-alanine ligase B.